The chain runs to 519 residues: ATP synthase subunit alpha 1 (519 aa).

172 to 179 is an ATP binding site; that stretch reads GDRQTGKT.

This sequence belongs to the ATPase alpha/beta chains family. F-type ATPases have 2 components, CF(1) - the catalytic core - and CF(0) - the membrane proton channel. CF(1) has five subunits: alpha(3), beta(3), gamma(1), delta(1), epsilon(1). CF(0) has three main subunits: a(1), b(2) and c(9-12). The alpha and beta chains form an alternating ring which encloses part of the gamma chain. CF(1) is attached to CF(0) by a central stalk formed by the gamma and epsilon chains, while a peripheral stalk is formed by the delta and b chains.

The protein localises to the cell inner membrane. It catalyses the reaction ATP + H2O + 4 H(+)(in) = ADP + phosphate + 5 H(+)(out). In terms of biological role, produces ATP from ADP in the presence of a proton gradient across the membrane. The alpha chain is a regulatory subunit. The protein is ATP synthase subunit alpha 1 of Psychromonas ingrahamii (strain DSM 17664 / CCUG 51855 / 37).